The primary structure comprises 128 residues: Cytochrome c-type biogenesis protein CcmE (128 aa).

At 1 to 8 (MQKRVRNR) the chain is on the cytoplasmic side. Residues 9–29 (LITIIICFCSACLGISIILYN) traverse the membrane as a helical; Signal-anchor for type II membrane protein segment. The Periplasmic segment spans residues 30 to 128 (LEKNIVFFLP…KHDENYRPPQ (99 aa)). Heme contacts are provided by H120 and Y124.

The protein belongs to the CcmE/CycJ family.

It is found in the cell inner membrane. Heme chaperone required for the biogenesis of c-type cytochromes. Transiently binds heme delivered by CcmC and transfers the heme to apo-cytochromes in a process facilitated by CcmF and CcmH. The sequence is that of Cytochrome c-type biogenesis protein CcmE from Rickettsia peacockii (strain Rustic).